The primary structure comprises 564 residues: MFS-type efflux pump LUC4 (564 aa).

The span at 1 to 15 (MGQSQDNTQLTTASP) shows a compositional bias: polar residues. Positions 1–35 (MGQSQDNTQLTTASPQAEKDLSSNDNPPESEPAAP) are disordered. The next 5 membrane-spanning stretches (helical) occupy residues 42-62 (WLVF…TSII), 78-98 (LYVW…PIFA), 108-128 (SLTL…GGAH), 141-161 (GVGG…MVSV), and 170-190 (IIGG…GAFA). Asparagine 192 is a glycosylation site (N-linked (GlcNAc...) asparagine). 3 helical membrane passes run 197 to 217 (WIFY…IVFL), 236 to 256 (WGGS…LSWG), and 268 to 288 (LVPL…QGAP). An N-linked (GlcNAc...) asparagine glycan is attached at asparagine 302. A run of 5 helical transmembrane segments spans residues 308–328 (LFVI…FLPV), 343–363 (VMLF…GIFI), 371–391 (VWHF…TLLD), 404–424 (LLFG…ILAS), and 436–456 (AWTF…AAAF). The N-linked (GlcNAc...) asparagine glycan is linked to asparagine 461. Residues 512 to 532 (KLVWQVSIAFSVLGFVLAFLV) form a helical membrane-spanning segment.

Belongs to the major facilitator superfamily. TCR/Tet family.

Its subcellular location is the membrane. Its function is as follows. MFS-type efflux pump; part of the gene cluster that mediates the biosynthesis of the mycotoxin lucilactaene and the lucilactaene-related compound NG-391 that act as cell cycle inhibitors with potent growth inhibitory activity against malarial parasites, moderate growth inhibitory activity against cancer cells, and no activity against bacteria and fungi. The protein is MFS-type efflux pump LUC4 of Fusarium sp.